A 503-amino-acid chain; its full sequence is Lysine--tRNA ligase (503 aa).

Residues E414 and E421 each contribute to the Mg(2+) site.

Belongs to the class-II aminoacyl-tRNA synthetase family. As to quaternary structure, homodimer. Requires Mg(2+) as cofactor.

The protein localises to the cytoplasm. The enzyme catalyses tRNA(Lys) + L-lysine + ATP = L-lysyl-tRNA(Lys) + AMP + diphosphate. This Laribacter hongkongensis (strain HLHK9) protein is Lysine--tRNA ligase.